The primary structure comprises 974 residues: Coiled-coil domain-containing protein 146 (974 aa).

The interval 1–44 (MEDRSKYIAEESEDEEDEEQEEKEKKGGASTSTETEEDQEDIPS) is disordered. The segment covering 10–21 (EESEDEEDEEQE) has biased composition (acidic residues). Residue serine 12 is modified to Phosphoserine. 6 coiled-coil regions span residues 105–160 (VQLL…QERE), 195–340 (KLLK…TKEN), 421–474 (LPEQ…REVL), 512–660 (KKLE…NESG), 687–712 (QDIE…QRQI), and 767–848 (LTEE…ELSM).

Interacts with CCDC38 and CCDC42. Interacts with intraflagellar transport proteins IFT20 and IFT88.

The protein localises to the cytoplasm. It is found in the cytoskeleton. The protein resides in the microtubule organizing center. It localises to the centrosome. Its subcellular location is the centriole. The protein localises to the cell projection. It is found in the cilium. The protein resides in the flagellum. It localises to the flagellum axoneme. Its subcellular location is the cilium basal body. The protein localises to the midbody. In terms of biological role, essential for sperm flagellum biogenesis and male fertility. The sequence is that of Coiled-coil domain-containing protein 146 (Ccdc146) from Rattus norvegicus (Rat).